Here is a 125-residue protein sequence, read N- to C-terminus: Actin, alpha skeletal muscle (125 aa).

Belongs to the actin family. Polymerization of globular actin (G-actin) leads to a structural filament (F-actin) in the form of a two-stranded helix. Each actin can bind to 4 others. Methylated at His-75 by SETD3.

The protein localises to the cytoplasm. The protein resides in the cytoskeleton. Its function is as follows. Actins are highly conserved proteins that are involved in various types of cell motility and are ubiquitously expressed in all eukaryotic cells. In Pleurodeles waltl (Iberian ribbed newt), this protein is Actin, alpha skeletal muscle.